Here is a 181-residue protein sequence, read N- to C-terminus: uncharacterized protein (181 aa).

It belongs to the isochorismatase family.

This is an uncharacterized protein from Bacillus subtilis (strain 168).